We begin with the raw amino-acid sequence, 180 residues long: MALRSRSWELLPVCRNPGCRVAAFSTSAKPVVKPEADPVGNEAVAPEFTNRNPRNLELLAVARKERGWGTVWPSREFWHRLRVIRSQHHIEALVEHRNGQVVVSASTREWAIKKHLYSTKSVVACESVGRVLAQRCLEAGINFMVYQPTPWEAASDSMKRLQIGMIEGGVVLQEPRRIYE.

This sequence belongs to the universal ribosomal protein uL18 family. In terms of assembly, component of the mitochondrial ribosome large subunit (39S) which comprises a 16S rRNA and about 50 distinct proteins.

Its subcellular location is the mitochondrion. Its function is as follows. Together with thiosulfate sulfurtransferase (TST), acts as a mitochondrial import factor for the cytosolic 5S rRNA. The precursor form shows RNA chaperone activity; is able to fold the 5S rRNA into an import-competent conformation that is recognized by rhodanese (TST). Both the cytoplasmic and mitochondrial forms are able to bind to the helix IV-loop D in the gamma domain of the 5S rRNA. This chain is Large ribosomal subunit protein uL18m (MRPL18), found in Bos taurus (Bovine).